A 2096-amino-acid chain; its full sequence is HEAT repeat-containing protein 1 homolog (2096 aa).

Residues 2058-2096 (TVPFIAELLEDEHQRVEKNTRTGVQELETILGESVQKYL) form an HEAT repeat.

Belongs to the HEATR1/UTP10 family. As to quaternary structure, part of the small subunit (SSU) processome, composed of more than 70 proteins and the RNA chaperone small nucleolar RNA (snoRNA) U3. Interacts with MYC; the interaction is required for localization of MYC to the nucleolus.

The protein localises to the nucleus. It is found in the nucleolus. Functionally, ribosome biogenesis factor; required for recruitment of Myc to nucleoli. Involved in nucleolar processing of pre-18S ribosomal RNA. Required for optimal pre-ribosomal RNA transcription by RNA polymerase I. Part of the small subunit (SSU) processome, first precursor of the small eukaryotic ribosomal subunit. During the assembly of the SSU processome in the nucleolus, many ribosome biogenesis factors, an RNA chaperone and ribosomal proteins associate with the nascent pre-rRNA and work in concert to generate RNA folding, modifications, rearrangements and cleavage as well as targeted degradation of pre-ribosomal RNA by the RNA exosome. Involved in neuronal-lineage cell proliferation during larval development. The protein is HEAT repeat-containing protein 1 homolog of Drosophila melanogaster (Fruit fly).